The primary structure comprises 277 residues: Uridine-cytidine kinase 1 (277 aa).

The span at 1 to 10 (MASAGGGDCE) shows a compositional bias: gly residues. Residues 1–29 (MASAGGGDCEGAGPEADRPHQRPFLIGVS) are disordered. 30 to 38 (GGTASGKST) serves as a coordination point for ATP. Residues Asp87, Tyr115, His120, Arg169, Arg178, and Gln186 each contribute to the substrate site. An ATP-binding site is contributed by Asp215. Positions 246–277 (RSHKRTFPEPGEHPAVLASGKRSHLESSSRPH) are disordered. Thr251 is subject to Phosphothreonine. A compositionally biased stretch (basic and acidic residues) spans 268–277 (SHLESSSRPH).

It belongs to the uridine kinase family.

The enzyme catalyses uridine + ATP = UMP + ADP + H(+). It catalyses the reaction cytidine + ATP = CMP + ADP + H(+). It participates in pyrimidine metabolism; CTP biosynthesis via salvage pathway; CTP from cytidine: step 1/3. Its pathway is pyrimidine metabolism; UMP biosynthesis via salvage pathway; UMP from uridine: step 1/1. Phosphorylates uridine and cytidine to uridine monophosphate and cytidine monophosphate. Does not phosphorylate deoxyribonucleosides or purine ribonucleosides. Can use ATP or GTP as a phosphate donor. The polypeptide is Uridine-cytidine kinase 1 (UCK1) (Bos taurus (Bovine)).